Consider the following 210-residue polypeptide: Chaperone protein TorD (210 aa).

Belongs to the TorD/DmsD family. TorD subfamily.

The protein localises to the cytoplasm. Functionally, involved in the biogenesis of TorA. Acts on TorA before the insertion of the molybdenum cofactor and, as a result, probably favors a conformation of the apoenzyme that is competent for acquiring the cofactor. In Salmonella arizonae (strain ATCC BAA-731 / CDC346-86 / RSK2980), this protein is Chaperone protein TorD.